Reading from the N-terminus, the 138-residue chain is Large ribosomal subunit protein bL17 (138 aa).

Belongs to the bacterial ribosomal protein bL17 family. In terms of assembly, part of the 50S ribosomal subunit. Contacts protein L32.

The chain is Large ribosomal subunit protein bL17 from Granulibacter bethesdensis (strain ATCC BAA-1260 / CGDNIH1).